A 196-amino-acid polypeptide reads, in one-letter code: Phosphoheptose isomerase (196 aa).

The region spanning methionine 34–alanine 196 is the SIS domain. Residue asparagine 49–glycine 51 coordinates substrate. Residues histidine 58 and glutamate 62 each contribute to the Zn(2+) site. Residues glutamate 62, asparagine 91–aspartate 92, serine 117–serine 119, serine 122, and glutamine 172 each bind substrate. 2 residues coordinate Zn(2+): glutamine 172 and histidine 180.

It belongs to the SIS family. GmhA subfamily. As to quaternary structure, homotetramer. Requires Zn(2+) as cofactor.

The protein resides in the cytoplasm. It carries out the reaction 2 D-sedoheptulose 7-phosphate = D-glycero-alpha-D-manno-heptose 7-phosphate + D-glycero-beta-D-manno-heptose 7-phosphate. Its pathway is carbohydrate biosynthesis; D-glycero-D-manno-heptose 7-phosphate biosynthesis; D-glycero-alpha-D-manno-heptose 7-phosphate and D-glycero-beta-D-manno-heptose 7-phosphate from sedoheptulose 7-phosphate: step 1/1. Catalyzes the isomerization of sedoheptulose 7-phosphate in D-glycero-D-manno-heptose 7-phosphate. This chain is Phosphoheptose isomerase, found in Shewanella denitrificans (strain OS217 / ATCC BAA-1090 / DSM 15013).